The primary structure comprises 2939 residues: Serine/threonine-protein kinase tel1 (2939 aa).

3 disordered regions span residues 193-212 (GTSV…RAGS), 695-718 (PPED…AADS), and 859-886 (KTRR…ETRK). A compositionally biased stretch (basic and acidic residues) spans 697–715 (EDSHKATSTDQPKREEIRA). The 603-residue stretch at 1869-2471 (IAAAAATRCG…MYQIWSGVKA (603 aa)) folds into the FAT domain. Positions 2577 to 2890 (FEPQMSIASG…DKKSTKNLNE (314 aa)) constitute a PI3K/PI4K catalytic domain. Residues 2583-2589 (IASGVSA) form a G-loop region. Positions 2755–2763 (GLGDRHGHN) are catalytic loop. Residues 2775–2799 (HIDLGVAFELGRILPVPELVPFRLT) are activation loop. The tract at residues 2869-2894 (DVVEAEDERRAGDKKSTKNLNEPSEA) is disordered. The segment covering 2875–2884 (DERRAGDKKS) has biased composition (basic and acidic residues). In terms of domain architecture, FATC spans 2907 to 2939 (KTLSVMATVNDLINQATDERNLAVLFCGWAAYA).

The protein belongs to the PI3/PI4-kinase family. ATM subfamily. Associates with DNA double-strand breaks.

The protein resides in the nucleus. Its subcellular location is the chromosome. It localises to the telomere. The catalysed reaction is L-seryl-[protein] + ATP = O-phospho-L-seryl-[protein] + ADP + H(+). The enzyme catalyses L-threonyl-[protein] + ATP = O-phospho-L-threonyl-[protein] + ADP + H(+). Functionally, serine/threonine protein kinase which activates checkpoint signaling upon genotoxic stresses such as ionizing radiation (IR), ultraviolet light (UV), or DNA replication stalling, thereby acting as a DNA damage sensor. Recognizes the substrate consensus sequence [ST]-Q. Phosphorylates histone H2A to form H2AS128ph (gamma-H2A) at sites of DNA damage, involved in the regulation of DNA damage response mechanism. Required for the control of telomere length and genome stability. The polypeptide is Serine/threonine-protein kinase tel1 (mus-21) (Neurospora crassa (strain ATCC 24698 / 74-OR23-1A / CBS 708.71 / DSM 1257 / FGSC 987)).